The chain runs to 318 residues: Protoheme IX farnesyltransferase (318 aa).

The next 9 helical transmembrane spans lie at 29–49, 51–71, 102–122, 123–143, 151–171, 179–199, 219–239, 241–261, and 280–300; these read IIPLLLITTAGSMWIAAQGQV, PVLLLVTMAGGTLAAASAQTI, LIFAIALAVLSFTLLTVFANL, LAASLALSGIIFYVLIYTHWL, IVIGGAAGAIPALVGWAAVTG, LIFAIVFLWTPPHFWALALMI, ATVKQIWYYTLITVAATLLLV, PLHASGIVYAAIAISLGAVFI, and LFLYSISYMMLLCLGMVVDSL.

Belongs to the UbiA prenyltransferase family. Protoheme IX farnesyltransferase subfamily.

Its subcellular location is the cell inner membrane. The catalysed reaction is heme b + (2E,6E)-farnesyl diphosphate + H2O = Fe(II)-heme o + diphosphate. Its pathway is porphyrin-containing compound metabolism; heme O biosynthesis; heme O from protoheme: step 1/1. Functionally, converts heme B (protoheme IX) to heme O by substitution of the vinyl group on carbon 2 of heme B porphyrin ring with a hydroxyethyl farnesyl side group. This is Protoheme IX farnesyltransferase from Nostoc sp. (strain PCC 7120 / SAG 25.82 / UTEX 2576).